The chain runs to 134 residues: D-ribose pyranase (134 aa).

The Proton donor role is filled by histidine 20. Substrate contacts are provided by residues aspartate 28, histidine 99, and 123-125 (FSN).

Belongs to the RbsD / FucU family. RbsD subfamily. As to quaternary structure, homodecamer.

The protein localises to the cytoplasm. The catalysed reaction is beta-D-ribopyranose = beta-D-ribofuranose. It participates in carbohydrate metabolism; D-ribose degradation; D-ribose 5-phosphate from beta-D-ribopyranose: step 1/2. Functionally, catalyzes the interconversion of beta-pyran and beta-furan forms of D-ribose. The polypeptide is D-ribose pyranase (Staphylococcus epidermidis (strain ATCC 12228 / FDA PCI 1200)).